Here is a 326-residue protein sequence, read N- to C-terminus: Putative ubiquitin-conjugating enzyme E2 38 (326 aa).

The UBC core domain maps to 54–214 (NWVKKVQDEW…VFLLSLKTMV (161 aa)). Cys140 functions as the Glycyl thioester intermediate in the catalytic mechanism. A disordered region spans residues 297–326 (LAEKPKPPVNNANTENQSKKKTRKRSRSSR). The span at 315 to 326 (KKKTRKRSRSSR) shows a compositional bias: basic residues.

It belongs to the ubiquitin-conjugating enzyme family.

The catalysed reaction is S-ubiquitinyl-[E1 ubiquitin-activating enzyme]-L-cysteine + [E2 ubiquitin-conjugating enzyme]-L-cysteine = [E1 ubiquitin-activating enzyme]-L-cysteine + S-ubiquitinyl-[E2 ubiquitin-conjugating enzyme]-L-cysteine.. The protein operates within protein modification; protein ubiquitination. In terms of biological role, accepts the ubiquitin from the E1 complex and catalyzes its covalent attachment to other proteins. The polypeptide is Putative ubiquitin-conjugating enzyme E2 38 (UBC38) (Arabidopsis thaliana (Mouse-ear cress)).